A 58-amino-acid chain; its full sequence is Dortoxin (58 aa).

The LCN-type CS-alpha/beta domain occupies 3 to 58 (VPGNYPLDKDGNTYTCLKLGENKDCQKVCKLHGVQYGYCYAFECWCKEYLDDKDSV). 3 cysteine pairs are disulfide-bonded: cysteine 18–cysteine 41, cysteine 27–cysteine 46, and cysteine 31–cysteine 48.

As to expression, expressed by the venom gland.

The protein localises to the secreted. Its function is as follows. Binds to sodium channels (Nav) and affects the channel activation process. In mice, causes hyperactivity that persists until death. The protein is Dortoxin of Parabuthus transvaalicus (Transvaal thick-tailed scorpion).